The primary structure comprises 367 residues: tRNA-specific 2-thiouridylase MnmA (367 aa).

ATP-binding positions include 7–14 (AMSGGVDS) and methionine 33. The active-site Nucleophile is cysteine 108. Cysteine 108 and cysteine 200 are joined by a disulfide. ATP is bound at residue glycine 132. The segment at 150–152 (KDQ) is interaction with tRNA. Residue cysteine 200 is the Cysteine persulfide intermediate of the active site. Positions 301–302 (RY) are interaction with tRNA.

It belongs to the MnmA/TRMU family.

Its subcellular location is the cytoplasm. The catalysed reaction is S-sulfanyl-L-cysteinyl-[protein] + uridine(34) in tRNA + AH2 + ATP = 2-thiouridine(34) in tRNA + L-cysteinyl-[protein] + A + AMP + diphosphate + H(+). Its function is as follows. Catalyzes the 2-thiolation of uridine at the wobble position (U34) of tRNA, leading to the formation of s(2)U34. The sequence is that of tRNA-specific 2-thiouridylase MnmA from Thermus thermophilus (strain ATCC BAA-163 / DSM 7039 / HB27).